The primary structure comprises 216 residues: Holliday junction branch migration complex subunit RuvA (216 aa).

Residues M1–K64 are domain I. The interval S65–T143 is domain II. The flexible linker stretch occupies residues S144–V163. Residues L164–R216 form a domain III region.

Belongs to the RuvA family. In terms of assembly, homotetramer. Forms an RuvA(8)-RuvB(12)-Holliday junction (HJ) complex. HJ DNA is sandwiched between 2 RuvA tetramers; dsDNA enters through RuvA and exits via RuvB. An RuvB hexamer assembles on each DNA strand where it exits the tetramer. Each RuvB hexamer is contacted by two RuvA subunits (via domain III) on 2 adjacent RuvB subunits; this complex drives branch migration. In the full resolvosome a probable DNA-RuvA(4)-RuvB(12)-RuvC(2) complex forms which resolves the HJ.

The protein localises to the cytoplasm. In terms of biological role, the RuvA-RuvB-RuvC complex processes Holliday junction (HJ) DNA during genetic recombination and DNA repair, while the RuvA-RuvB complex plays an important role in the rescue of blocked DNA replication forks via replication fork reversal (RFR). RuvA specifically binds to HJ cruciform DNA, conferring on it an open structure. The RuvB hexamer acts as an ATP-dependent pump, pulling dsDNA into and through the RuvAB complex. HJ branch migration allows RuvC to scan DNA until it finds its consensus sequence, where it cleaves and resolves the cruciform DNA. This is Holliday junction branch migration complex subunit RuvA from Francisella tularensis subsp. novicida (strain U112).